The primary structure comprises 450 residues: Glutamate--tRNA ligase 2 (450 aa).

The 'HIGH' region signature appears at 10 to 20 (PSPTGFLHIGG). The short motif at 232 to 236 (KLSKR) is the 'KMSKS' region element. Residue Lys-235 coordinates ATP.

Belongs to the class-I aminoacyl-tRNA synthetase family. Glutamate--tRNA ligase type 1 subfamily. In terms of assembly, monomer.

Its subcellular location is the cytoplasm. The enzyme catalyses tRNA(Glu) + L-glutamate + ATP = L-glutamyl-tRNA(Glu) + AMP + diphosphate. In terms of biological role, catalyzes the attachment of glutamate to tRNA(Glu) in a two-step reaction: glutamate is first activated by ATP to form Glu-AMP and then transferred to the acceptor end of tRNA(Glu). This is Glutamate--tRNA ligase 2 from Wolbachia pipientis subsp. Culex pipiens (strain wPip).